A 50-amino-acid polypeptide reads, in one-letter code: METTNFGFVASLLFVGVPTIFLIGLFISTQDGEKSSFYSDSGKGKLGPKR.

The chain crosses the membrane as a helical span at residues 7–27 (GFVASLLFVGVPTIFLIGLFI).

It belongs to the PsbM family. In terms of assembly, PSII is composed of 1 copy each of membrane proteins PsbA, PsbB, PsbC, PsbD, PsbE, PsbF, PsbH, PsbI, PsbJ, PsbK, PsbL, PsbM, PsbT, PsbX, PsbY, Psb30/Ycf12, peripheral proteins PsbO, CyanoQ (PsbQ), PsbU, PsbV and a large number of cofactors. It forms dimeric complexes.

The protein resides in the cellular thylakoid membrane. Its function is as follows. One of the components of the core complex of photosystem II (PSII). PSII is a light-driven water:plastoquinone oxidoreductase that uses light energy to abstract electrons from H(2)O, generating O(2) and a proton gradient subsequently used for ATP formation. It consists of a core antenna complex that captures photons, and an electron transfer chain that converts photonic excitation into a charge separation. This subunit is found at the monomer-monomer interface. The chain is Photosystem II reaction center protein M from Prochlorococcus marinus (strain MIT 9515).